A 273-amino-acid chain; its full sequence is Shikimate dehydrogenase (NADP(+)) (273 aa).

Residues 15–17 and threonine 62 each bind shikimate; that span reads SKS. Lysine 66 acts as the Proton acceptor in catalysis. Aspartate 78 contacts NADP(+). Shikimate-binding residues include asparagine 87 and aspartate 103. NADP(+) contacts are provided by residues 127-131, 150-155, and methionine 214; these read GAGGA and NRTYAR. Tyrosine 216 lines the shikimate pocket. Glycine 238 is a binding site for NADP(+).

This sequence belongs to the shikimate dehydrogenase family. Homodimer.

It catalyses the reaction shikimate + NADP(+) = 3-dehydroshikimate + NADPH + H(+). The protein operates within metabolic intermediate biosynthesis; chorismate biosynthesis; chorismate from D-erythrose 4-phosphate and phosphoenolpyruvate: step 4/7. Its function is as follows. Involved in the biosynthesis of the chorismate, which leads to the biosynthesis of aromatic amino acids. Catalyzes the reversible NADPH linked reduction of 3-dehydroshikimate (DHSA) to yield shikimate (SA). The chain is Shikimate dehydrogenase (NADP(+)) from Yersinia enterocolitica serotype O:8 / biotype 1B (strain NCTC 13174 / 8081).